The primary structure comprises 271 residues: Short-chain dehydrogenase PC-15 (271 aa).

Positions 8, 34, 40, 56, 84, 148, 152, 181, and 183 each coordinate NADP(+). Catalysis depends on Y148, which acts as the Proton acceptor. K152 (lowers pKa of active site Tyr) is an active-site residue.

It belongs to the short-chain dehydrogenases/reductases (SDR) family.

It functions in the pathway secondary metabolite biosynthesis. In terms of biological role, short-chain dehydrogenase; part of the gene cluster that mediates the biosynthesis of the indole diterpenes penitrems. The geranylgeranyl diphosphate (GGPP) synthase penG catalyzes the first step in penitrem biosynthesis via conversion of farnesyl pyrophosphate and isopentyl pyrophosphate into geranylgeranyl pyrophosphate (GGPP). Condensation of indole-3-glycerol phosphate with GGPP by the prenyl transferase penC then forms 3-geranylgeranylindole (3-GGI). Epoxidation by the FAD-dependent monooxygenase penM leads to a epoxidized-GGI that is substrate of the terpene cyclase penB for cyclization to yield paspaline. Paspaline is subsequently converted to 13-desoxypaxilline by the cytochrome P450 monooxygenase penP, the latter being then converted to paxilline by the cytochrome P450 monooxygenase penQ. Paxilline is converted to beta-paxitriol via C-10 ketoreduction by the short-chain dehydrogenase PC-15 which can be monoprenylated at the C-20 by the indole diterpene prenyltransferase penD. A two-step elimination (acetylation and elimination) process performed by the O-acetyltransferase PC-16 and the P.simplicissimum ptmI-ortholog not yet identified in P.crustosum, leads to the production of the prenylated form of penijanthine. The FAD-linked oxidoreductase ptmO then converts the prenylated form of penijanthine into PC-M5 which is in turn transformed into PC-M4 by the aromatic dimethylallyltransferase PC-22. A series of oxidation steps involving 4 cytochrome P450 monooxygenases (PC-21, PC-05, PC-23, PC-20) and a FAD-dependent monooxygenase (PC-14) are required for the transformation of PC-M4 to penitrems A and E. Synthesis of these final products is proposed to proceed via penitrems D and C (PC-21, PC-05, PC-14) and penitrems B and F (PC-21, PC-05, PC-14, PC-23). In Penicillium crustosum (Blue mold fungus), this protein is Short-chain dehydrogenase PC-15.